The primary structure comprises 424 residues: Histidine--tRNA ligase (424 aa).

This sequence belongs to the class-II aminoacyl-tRNA synthetase family. Homodimer.

Its subcellular location is the cytoplasm. It catalyses the reaction tRNA(His) + L-histidine + ATP = L-histidyl-tRNA(His) + AMP + diphosphate + H(+). The protein is Histidine--tRNA ligase of Salmonella agona (strain SL483).